The sequence spans 351 residues: Transmembrane protein 115 (351 aa).

Over 1 to 19 the chain is Cytoplasmic; the sequence is MQRALPGARQHLGAILASA. A mediates homooligomerization region spans residues 1 to 205; sequence MQRALPGARQ…FGLLSSWVYL (205 aa). The helical transmembrane segment at 20-40 threads the bilayer; that stretch reads SVVVKALCAAVLFLYLLSFAV. Residues 41-97 lie on the Lumenal side of the membrane; that stretch reads DTGCLAVTPGYLFPPNFWIWTLATHGLMEQHVWDVAISLTTVVVAGRLLEPLWGALE. Residues 98–118 traverse the membrane as a helical segment; that stretch reads LLIFFSVVNVSVGLLGAFAYL. Residues 119–126 lie on the Cytoplasmic side of the membrane; it reads LTYMASFN. A helical membrane pass occupies residues 127-147; that stretch reads LVYLFTVRIHGALGFLGGVLV. Residues 148–165 are Lumenal-facing; the sequence is ALKQTMGDCVVLRVPQVR. Residues 166-186 form a helical membrane-spanning segment; the sequence is VSVMPMLLLALLLLLRLATLL. The Cytoplasmic segment spans residues 187–351; it reads QSPALASYGF…ITFEAAPPTL (165 aa). The tract at residues 206 to 229 is mediates localization to the Golgi; the sequence is RFYQRHSRGRGDMADHFAFATFFP. Positions 301–351 are disordered; sequence QSIWPSMDDDEEESGAKVDSPLPSDKAPTPPGKGAAPESSLITFEAAPPTL. Phosphothreonine is present on Thr329.

This sequence belongs to the TMEM115 family. As to quaternary structure, homooligomer. Interacts with COPB1. May interact with LMAN1. Interacts with the COG complex; probably through COG3. Expressed strongly in kidney and skeletal muscle, followed by liver, placenta, pancreas, and lung, with low amounts in heart and only traces in brain. Widely expressed with ubiquitous expression in epithelial tissues (at protein level).

It is found in the golgi apparatus. The protein resides in the golgi stack membrane. May play a role in retrograde transport of proteins from the Golgi to the endoplasmic reticulum. May indirectly play a role in protein glycosylation in the Golgi. In Homo sapiens (Human), this protein is Transmembrane protein 115.